A 461-amino-acid polypeptide reads, in one-letter code: Argininosuccinate lyase (461 aa).

It belongs to the lyase 1 family. Argininosuccinate lyase subfamily.

It localises to the cytoplasm. It catalyses the reaction 2-(N(omega)-L-arginino)succinate = fumarate + L-arginine. The protein operates within amino-acid biosynthesis; L-arginine biosynthesis; L-arginine from L-ornithine and carbamoyl phosphate: step 3/3. This Bacillus subtilis (strain 168) protein is Argininosuccinate lyase.